A 251-amino-acid polypeptide reads, in one-letter code: Small ribosomal subunit protein uS2 (251 aa).

Position 2 is an N-acetylserine (Ser2). Positions 209–251 (EIEQQTAEEAAQEAGEEEAKEEVTEEQTEAAEWAQENADNVEW) are disordered. The span at 218-237 (AAQEAGEEEAKEEVTEEQTE) shows a compositional bias: acidic residues. Low complexity predominate over residues 238-251 (AAEWAQENADNVEW).

This sequence belongs to the universal ribosomal protein uS2 family. In terms of assembly, component of the small ribosomal subunit. Mature ribosomes consist of a small (40S) and a large (60S) subunit. The 40S subunit contains about 33 different proteins and 1 molecule of RNA (18S). The 60S subunit contains about 49 different proteins and 3 molecules of RNA (25S, 5.8S and 5S). Interacts with RPS21.

The protein localises to the cytoplasm. Required for the assembly and/or stability of the 40S ribosomal subunit. Required for the processing of the 20S rRNA-precursor to mature 18S rRNA in a late step of the maturation of 40S ribosomal subunits. The chain is Small ribosomal subunit protein uS2 from Candida glabrata (strain ATCC 2001 / BCRC 20586 / JCM 3761 / NBRC 0622 / NRRL Y-65 / CBS 138) (Yeast).